The primary structure comprises 1793 residues: Protein TIC 214 (1793 aa).

Transmembrane regions (helical) follow at residues 11 to 31 (LVSLCLKIINSVIVVGLYYGF), 64 to 84 (FITGQLVMFISIYYAPLHIAL), 90 to 112 (ITVITLPYLLLYFLGNNQKNFLN), 129 to 149 (IFFQNLFFQLLNPFFLPSSIL), 172 to 192 (VGWLIGHVFFMKWIGLMLVWI), and 222 to 242 (IFLIFFFITCLYYLGRIPPIY). The segment at 1504–1524 (DIEEDYGESDSKKGGKDKNKK) is disordered.

Belongs to the TIC214 family. As to quaternary structure, part of the Tic complex.

It localises to the plastid. Its subcellular location is the chloroplast inner membrane. In terms of biological role, involved in protein precursor import into chloroplasts. May be part of an intermediate translocation complex acting as a protein-conducting channel at the inner envelope. The chain is Protein TIC 214 from Lotus japonicus (Lotus corniculatus var. japonicus).